A 248-amino-acid polypeptide reads, in one-letter code: Protein GrpE (248 aa).

Residues 229–248 are disordered; that stretch reads AAPKEDTLPAQENQSSPADS. A compositionally biased stretch (polar residues) spans 238-248; sequence AQENQSSPADS.

This sequence belongs to the GrpE family. Homodimer.

The protein localises to the cytoplasm. Functionally, participates actively in the response to hyperosmotic and heat shock by preventing the aggregation of stress-denatured proteins, in association with DnaK and GrpE. It is the nucleotide exchange factor for DnaK and may function as a thermosensor. Unfolded proteins bind initially to DnaJ; upon interaction with the DnaJ-bound protein, DnaK hydrolyzes its bound ATP, resulting in the formation of a stable complex. GrpE releases ADP from DnaK; ATP binding to DnaK triggers the release of the substrate protein, thus completing the reaction cycle. Several rounds of ATP-dependent interactions between DnaJ, DnaK and GrpE are required for fully efficient folding. The polypeptide is Protein GrpE (Nostoc sp. (strain PCC 7120 / SAG 25.82 / UTEX 2576)).